A 243-amino-acid chain; its full sequence is uncharacterized protein (243 aa).

Residues 207–224 (KKTSISGYKTLDVKRKFV) carry the Bipartite nuclear localization signal motif.

This is an uncharacterized protein from Acheta domesticus (House cricket).